The following is a 378-amino-acid chain: Dual-specificity RNA methyltransferase RlmN (378 aa).

Residue Glu95 is the Proton acceptor of the active site. The region spanning 101-345 is the Radical SAM core domain; that stretch reads EETRGTLCVS…TTIRKTRGDD (245 aa). A disulfide bridge links Cys108 with Cys350. Residues Cys115, Cys119, and Cys122 each coordinate [4Fe-4S] cluster. S-adenosyl-L-methionine contacts are provided by residues 176–177, Ser208, 230–232, and Asn307; these read GE and SLH. Residue Cys350 is the S-methylcysteine intermediate of the active site.

It belongs to the radical SAM superfamily. RlmN family. [4Fe-4S] cluster is required as a cofactor.

It is found in the cytoplasm. It carries out the reaction adenosine(2503) in 23S rRNA + 2 reduced [2Fe-2S]-[ferredoxin] + 2 S-adenosyl-L-methionine = 2-methyladenosine(2503) in 23S rRNA + 5'-deoxyadenosine + L-methionine + 2 oxidized [2Fe-2S]-[ferredoxin] + S-adenosyl-L-homocysteine. The enzyme catalyses adenosine(37) in tRNA + 2 reduced [2Fe-2S]-[ferredoxin] + 2 S-adenosyl-L-methionine = 2-methyladenosine(37) in tRNA + 5'-deoxyadenosine + L-methionine + 2 oxidized [2Fe-2S]-[ferredoxin] + S-adenosyl-L-homocysteine. Its function is as follows. Specifically methylates position 2 of adenine 2503 in 23S rRNA and position 2 of adenine 37 in tRNAs. m2A2503 modification seems to play a crucial role in the proofreading step occurring at the peptidyl transferase center and thus would serve to optimize ribosomal fidelity. This chain is Dual-specificity RNA methyltransferase RlmN, found in Burkholderia pseudomallei (strain K96243).